The sequence spans 150 residues: Large ribosomal subunit protein bL9 (150 aa).

Belongs to the bacterial ribosomal protein bL9 family.

Binds to the 23S rRNA. This chain is Large ribosomal subunit protein bL9, found in Arthrobacter sp. (strain FB24).